We begin with the raw amino-acid sequence, 79 residues long: Defensin-like protein 117 (79 aa).

The signal sequence occupies residues 1–24 (MTTTKTMLVAFVLTLFFVISSVHC). 4 disulfide bridges follow: cysteine 40–cysteine 75, cysteine 46–cysteine 68, cysteine 53–cysteine 73, and cysteine 57–cysteine 74.

Belongs to the DEFL family.

It localises to the secreted. This Arabidopsis thaliana (Mouse-ear cress) protein is Defensin-like protein 117.